The sequence spans 564 residues: NAD-dependent malic enzyme (564 aa).

Tyr-102 functions as the Proton donor in the catalytic mechanism. Position 155 (Arg-155) interacts with NAD(+). Lys-173 acts as the Proton acceptor in catalysis. A divalent metal cation-binding residues include Glu-244, Asp-245, and Asp-268. Positions 268 and 417 each coordinate NAD(+).

It belongs to the malic enzymes family. As to quaternary structure, homotetramer. Mg(2+) serves as cofactor. Mn(2+) is required as a cofactor.

The enzyme catalyses (S)-malate + NAD(+) = pyruvate + CO2 + NADH. It catalyses the reaction oxaloacetate + H(+) = pyruvate + CO2. The sequence is that of NAD-dependent malic enzyme from Pseudomonas aeruginosa (strain ATCC 15692 / DSM 22644 / CIP 104116 / JCM 14847 / LMG 12228 / 1C / PRS 101 / PAO1).